We begin with the raw amino-acid sequence, 125 residues long: UPF0102 protein PSPA7_4996 (125 aa).

It belongs to the UPF0102 family.

The chain is UPF0102 protein PSPA7_4996 from Pseudomonas paraeruginosa (strain DSM 24068 / PA7) (Pseudomonas aeruginosa (strain PA7)).